The sequence spans 68 residues: MMFRLTSVGCFLLVIACLNLFQVVLTRRCFPLGTFCSRYLPCCSGMCCSGWCTRRCAPRFGKRATFQE.

Residues 1–26 (MMFRLTSVGCFLLVIACLNLFQVVLT) form the signal peptide. Disulfide bonds link cysteine 29/cysteine 43, cysteine 36/cysteine 48, cysteine 42/cysteine 52, and cysteine 47/cysteine 56. Position 60 is a phenylalanine amide (phenylalanine 60). The propeptide occupies 64–68 (ATFQE).

This sequence belongs to the conotoxin I2 superfamily. In terms of tissue distribution, expressed by the venom duct.

The protein resides in the secreted. In Conus emaciatus (False virgin cone), this protein is Conotoxin Em11.5.